The following is a 61-amino-acid chain: Small ribosomal subunit protein uS14 (61 aa).

Zn(2+) is bound by residues Cys-24, Cys-27, Cys-40, and Cys-43.

It belongs to the universal ribosomal protein uS14 family. Zinc-binding uS14 subfamily. Part of the 30S ribosomal subunit. Contacts proteins S3 and S10. Requires Zn(2+) as cofactor.

Its function is as follows. Binds 16S rRNA, required for the assembly of 30S particles and may also be responsible for determining the conformation of the 16S rRNA at the A site. In Mycoplasmopsis agalactiae (strain NCTC 10123 / CIP 59.7 / PG2) (Mycoplasma agalactiae), this protein is Small ribosomal subunit protein uS14.